Here is a 272-residue protein sequence, read N- to C-terminus: uncharacterized protein (272 aa).

The region spanning 1–27 is the HTH merR-type domain; sequence MDTLAFINRALVEEGYSLKDIKLVLIT.

This is an uncharacterized protein from Aquifex aeolicus (strain VF5).